We begin with the raw amino-acid sequence, 226 residues long: Staphylococcal superantigen-like 1 (226 aa).

The N-terminal stretch at 1 to 30 (MKFKAIAKASLALGMLATGVITSNVQSVQA) is a signal peptide.

This sequence belongs to the staphylococcal/streptococcal toxin family. Homodimer.

It localises to the secreted. Mediates virulence by proteolytically cleaving host proteins, including collagens types I and IV as well as human cytokines IL8, IL17A, and IFN-gamma. The polypeptide is Staphylococcal superantigen-like 1 (Staphylococcus aureus (strain NCTC 8325 / PS 47)).